The chain runs to 93 residues: Consomatin G1 (93 aa).

The N-terminal stretch at 1-22 is a signal peptide; it reads MQTAYWVMLMMMVCITAPLPEG. A propeptide spanning residues 23-69 is cleaved from the precursor; that stretch reads GKPNSGIRGLVPNDLTPQHTLRSLISRRQTDVLLDATLLTTPAPEQR. Cysteines 72 and 77 form a disulfide. D-tryptophan is present on W74. Positions 79-93 are excised as a propeptide; the sequence is PRPYPWRRRDLNGKR.

This sequence belongs to the conotoxin C superfamily. Consomatin family. In terms of tissue distribution, expressed by the venom duct.

Its subcellular location is the secreted. In terms of biological role, potently activates human somatostatin receptors (SSTR) with a specific activation of SSTR2 (EC(50)=2.6 nM). In Conus geographus (Geography cone), this protein is Consomatin G1.